The sequence spans 484 residues: RuvB-like helicase 1 (484 aa).

A compositionally biased stretch (low complexity) spans 1–11 (MSMAASSSTAT). Residues 1-27 (MSMAASSSTATVQPSGIITQPPPPSTL) are disordered. 87–94 (GPPGTGKT) provides a ligand contact to ATP.

Belongs to the RuvB family. May form heterododecamers with RVB2. Component of the SWR1 chromatin remodeling complex, the INO80 chromatin remodeling complex, and of the R2TP complex.

The protein localises to the nucleus. The enzyme catalyses ATP + H2O = ADP + phosphate + H(+). In terms of biological role, DNA helicase which participates in several chromatin remodeling complexes, including the SWR1 and the INO80 complexes. The SWR1 complex mediates the ATP-dependent exchange of histone H2A for the H2A variant HZT1 leading to transcriptional regulation of selected genes by chromatin remodeling. The INO80 complex remodels chromatin by shifting nucleosomes and is involved in DNA repair. Also involved in pre-rRNA processing. The polypeptide is RuvB-like helicase 1 (RVB1) (Cryptococcus neoformans var. neoformans serotype D (strain B-3501A) (Filobasidiella neoformans)).